Consider the following 425-residue polypeptide: Protein translocase subunit SecY (425 aa).

10 helical membrane passes run 15–35 (LLSL…VPGI), 62–82 (TVVV…SIIM), 113–131 (LLTL…FYLK), 139–159 (LVLA…VLWL), 168–188 (LGNG…PGFV), 201–221 (IGSW…IVLL), 266–286 (PIIL…LGLL), 304–324 (IIYW…YSTI), 364–384 (LLGA…QAIL), and 385–405 (SLSG…GVIL).

It belongs to the SecY/SEC61-alpha family. Component of the plastid Sec protein translocase complex, which is composed of at least SecY, SecE and SecG.

It localises to the plastid. Its subcellular location is the chloroplast thylakoid membrane. Functionally, the central subunit of the protein translocation channel SecYE. Consists of two halves formed by TMs 1-5 and 6-10. These two domains form a lateral gate at the front which open onto the bilayer between TMs 2 and 7, and are clamped together by SecE at the back. The channel is closed by both a pore ring composed of hydrophobic SecY resides and a short helix (helix 2A) on the extracellular side of the membrane which forms a plug. This Trieres chinensis (Marine centric diatom) protein is Protein translocase subunit SecY.